We begin with the raw amino-acid sequence, 404 residues long: High affinity immunoglobulin gamma Fc receptor I (404 aa).

A signal peptide spans 1 to 24 (MILTSFGDDMWLLTTLLLWVPVGG). Over 25–297 (EVVNATKAVI…QVLGPQSSAP (273 aa)) the chain is Extracellular. Asn28, Asn48, Asn69, Asn168, and Asn249 each carry an N-linked (GlcNAc...) asparagine glycan. 3 Ig-like C2-type domains span residues 32-111 (AVIT…LQIH), 117-194 (LQAS…SITV), and 201-286 (PVLR…PELE). Intrachain disulfides connect Cys53–Cys95, Cys134–Cys177, and Cys221–Cys269. The chain crosses the membrane as a helical span at residues 298 to 320 (VWFHILFYLSVGIMFSLNTVLYV). The interaction with EPB41L2 stretch occupies residues 321-342 (KIHRLQREKKYNLEVPLVSEQG). At 321–404 (KIHRLQREKK…DSTGAQTSQS (84 aa)) the chain is on the cytoplasmic side. The tract at residues 346-404 (NSFQQVRSDGVYEEVTATASQTTPKEAPDGPRSSVGDCGPEQPEPLPPSDSTGAQTSQS) is disordered. Phosphoserine is present on Ser347. At Thr368 the chain carries Phosphothreonine. Positions 394–404 (SDSTGAQTSQS) are enriched in polar residues.

The protein belongs to the immunoglobulin superfamily. FCGR1 family. In terms of assembly, interacts with FCERG1; forms a functional signaling complex. Interacts with FLNA; prevents FCGR1A degradation. Interacts with EPB41L2, LAT and PPL. Interacts with HCK and LYN. N-glycosylated. Post-translationally, phosphorylated on serine residues. Macrophage-specific.

The protein localises to the cell membrane. Its function is as follows. High affinity receptor for the Fc region of immunoglobulins gamma. Functions in both innate and adaptive immune responses. The sequence is that of High affinity immunoglobulin gamma Fc receptor I (Fcgr1) from Mus musculus (Mouse).